We begin with the raw amino-acid sequence, 389 residues long: Cytochrome b (389 aa).

Helical transmembrane passes span 36 to 56, 80 to 102, 117 to 137, and 183 to 203; these read MGSL…FLAM, WLIR…THIA, VWTV…LGYC, and FFAF…MHMM. His86 and His100 together coordinate heme b. The heme b site is built by His187 and His201. His206 provides a ligand contact to a ubiquinone. 4 consecutive transmembrane segments (helical) span residues 229–249, 293–313, 325–345, and 352–372; these read FVFK…LFVF, LLGV…PITD, LSKF…IIGM, and FVLI…IIVP.

Belongs to the cytochrome b family. Fungal cytochrome b-c1 complex contains 10 subunits; 3 respiratory subunits, 2 core proteins and 5 low-molecular weight proteins. Cytochrome b-c1 complex is a homodimer. It depends on heme b as a cofactor.

The protein localises to the mitochondrion inner membrane. Component of the ubiquinol-cytochrome c reductase complex (complex III or cytochrome b-c1 complex) that is part of the mitochondrial respiratory chain. The b-c1 complex mediates electron transfer from ubiquinol to cytochrome c. Contributes to the generation of a proton gradient across the mitochondrial membrane that is then used for ATP synthesis. This Vanderwaltozyma polyspora (strain ATCC 22028 / DSM 70294 / BCRC 21397 / CBS 2163 / NBRC 10782 / NRRL Y-8283 / UCD 57-17) (Kluyveromyces polysporus) protein is Cytochrome b (COB).